A 264-amino-acid chain; its full sequence is NFAT activation molecule 1 (264 aa).

The first 37 residues, 1 to 37 (MESWLLRRGARVRCLHPPSWLPAWCFLCLLPVPQTLQ), serve as a signal peptide directing secretion. At 38–159 (LTGLVSLTHT…QPPAFKVQEA (122 aa)) the chain is on the extracellular side. The 97-residue stretch at 49-145 (LPIMVSLANT…QSDGVVILVR (97 aa)) folds into the Ig-like V-type domain. Residues cysteine 64 and cysteine 110 are joined by a disulfide bond. Asparagine 105 and asparagine 118 each carry an N-linked (GlcNAc...) asparagine glycan. A helical transmembrane segment spans residues 160 to 180 (LMLGFTSLMSVLGVLGTALLL). At 181–264 (WKKKQISVLG…NEFNLVYENL (84 aa)) the chain is on the cytoplasmic side. In terms of domain architecture, ITAM spans 212–232 (ESVYTSLQRRETEVYACMKEE). Tyrosine 215 and tyrosine 226 each carry phosphotyrosine.

As to quaternary structure, no direct interaction with the B-cell antigen receptor (BCR). Interacts with SYK; probably involved in BCR signaling. Interacts with ZAP70. In terms of processing, N-glycosylated. In terms of tissue distribution, highly expressed in the spleen, expressed by both B- and CD4+ and CD8+ T-cells, as well as non-T- and non-B-cells, including macrophages and neutrophils. Expressed at low levels, if any, in non-immune tissue.

Its subcellular location is the cell membrane. Its function is as follows. May function in immune system as a receptor which activates via the calcineurin/NFAT-signaling pathway the downstream cytokine gene promoters. Activates the transcription of IL-13 and TNF-alpha promoters. May be involved in the regulation of B-cell, but not T-cell, development. The protein is NFAT activation molecule 1 (Nfam1) of Mus musculus (Mouse).